The primary structure comprises 319 residues: Ferrochelatase (319 aa).

Fe cation contacts are provided by His193 and Glu274.

This sequence belongs to the ferrochelatase family.

The protein resides in the cytoplasm. The catalysed reaction is heme b + 2 H(+) = protoporphyrin IX + Fe(2+). Its pathway is porphyrin-containing compound metabolism; protoheme biosynthesis; protoheme from protoporphyrin-IX: step 1/1. Its function is as follows. Catalyzes the ferrous insertion into protoporphyrin IX. In Actinobacillus pleuropneumoniae serotype 5b (strain L20), this protein is Ferrochelatase.